Here is an 894-residue protein sequence, read N- to C-terminus: Protein SEY1 homolog (894 aa).

Composition is skewed to low complexity over residues M1–T10 and V36–Q48. The disordered stretch occupies residues M1–H97. Topologically, residues M1–G800 are cytoplasmic. Residues R21–E60 are a coiled coil. Residues E49–V65 are compositionally biased toward acidic residues. Positions T78–Q93 are enriched in low complexity. The GB1/RHD3-type G domain maps to G138 to Y361. Residue G148–S155 participates in GTP binding. A helical transmembrane segment spans residues V801 to I821. At S822–P824 the chain is on the lumenal side. A helical transmembrane segment spans residues L825–L845. Residues A846 to E894 are Cytoplasmic-facing.

Belongs to the TRAFAC class dynamin-like GTPase superfamily. GB1/RHD3 GTPase family. RHD3 subfamily.

It is found in the endoplasmic reticulum membrane. Probable GTP-binding protein that may be involved in cell development. This is Protein SEY1 homolog from Dictyostelium discoideum (Social amoeba).